The sequence spans 554 residues: CTP synthase (554 aa).

The amidoligase domain stretch occupies residues 1 to 270 (MTKFVFVTGG…DRIICEELRI (270 aa)). Ser13 is a CTP binding site. Ser13 provides a ligand contact to UTP. Residues 14 to 19 (SLGKGI) and Asp71 each bind ATP. 2 residues coordinate Mg(2+): Asp71 and Glu144. Residues 151-153 (DIE), 191-196 (KTKPTQ), and Lys227 each bind CTP. UTP contacts are provided by residues 191-196 (KTKPTQ) and Lys227. The Glutamine amidotransferase type-1 domain maps to 295–547 (TIGMVGKYVD…VEAALAHRQR (253 aa)). Gly356 contacts L-glutamine. The Nucleophile; for glutamine hydrolysis role is filled by Cys383. Residues 384–387 (LGMQ), Glu407, and Arg473 contribute to the L-glutamine site. Residues His520 and Glu522 contribute to the active site.

Belongs to the CTP synthase family. In terms of assembly, homotetramer.

It carries out the reaction UTP + L-glutamine + ATP + H2O = CTP + L-glutamate + ADP + phosphate + 2 H(+). It catalyses the reaction L-glutamine + H2O = L-glutamate + NH4(+). The catalysed reaction is UTP + NH4(+) + ATP = CTP + ADP + phosphate + 2 H(+). Its pathway is pyrimidine metabolism; CTP biosynthesis via de novo pathway; CTP from UDP: step 2/2. With respect to regulation, allosterically activated by GTP, when glutamine is the substrate; GTP has no effect on the reaction when ammonia is the substrate. The allosteric effector GTP functions by stabilizing the protein conformation that binds the tetrahedral intermediate(s) formed during glutamine hydrolysis. Inhibited by the product CTP, via allosteric rather than competitive inhibition. In terms of biological role, catalyzes the ATP-dependent amination of UTP to CTP with either L-glutamine or ammonia as the source of nitrogen. Regulates intracellular CTP levels through interactions with the four ribonucleotide triphosphates. The sequence is that of CTP synthase from Ralstonia nicotianae (strain ATCC BAA-1114 / GMI1000) (Ralstonia solanacearum).